Reading from the N-terminus, the 101-residue chain is Small ribosomal subunit protein uS14 (101 aa).

The protein belongs to the universal ribosomal protein uS14 family. In terms of assembly, part of the 30S ribosomal subunit. Contacts proteins S3 and S10.

Binds 16S rRNA, required for the assembly of 30S particles and may also be responsible for determining the conformation of the 16S rRNA at the A site. The sequence is that of Small ribosomal subunit protein uS14 from Francisella philomiragia subsp. philomiragia (strain ATCC 25017 / CCUG 19701 / FSC 153 / O#319-036).